A 135-amino-acid polypeptide reads, in one-letter code: MRSSSLPGARSPRRNGSGQSRHRLPPGRLRTGSRAPTAEARPHVARSPPTPGTGARGGGRRGWGGSRAAPQRGSCASANAQKQLRQTAATYMLTARGGSRSAERKGDLQRTFRQVGQTMPMVPPLDFTMNAASVE.

The tract at residues 1 to 80 is disordered; the sequence is MRSSSLPGAR…QRGSCASANA (80 aa). A compositionally biased stretch (gly residues) spans 54–65; the sequence is GARGGGRRGWGG.

This is an uncharacterized protein from Homo sapiens (Human).